Here is a 375-residue protein sequence, read N- to C-terminus: Probable aspartate aminotransferase (375 aa).

L-aspartate is bound by residues Gly31 and Asn165. N6-(pyridoxal phosphate)lysine is present on Lys223. Arg353 serves as a coordination point for L-aspartate.

It belongs to the class-I pyridoxal-phosphate-dependent aminotransferase family. As to quaternary structure, homodimer. Pyridoxal 5'-phosphate serves as cofactor.

It localises to the cytoplasm. The catalysed reaction is L-aspartate + 2-oxoglutarate = oxaloacetate + L-glutamate. This is Probable aspartate aminotransferase from Methanocaldococcus jannaschii (strain ATCC 43067 / DSM 2661 / JAL-1 / JCM 10045 / NBRC 100440) (Methanococcus jannaschii).